We begin with the raw amino-acid sequence, 122 residues long: Ribosome-binding factor A (122 aa).

The protein belongs to the RbfA family. As to quaternary structure, monomer. Binds 30S ribosomal subunits, but not 50S ribosomal subunits or 70S ribosomes.

The protein resides in the cytoplasm. In terms of biological role, one of several proteins that assist in the late maturation steps of the functional core of the 30S ribosomal subunit. Associates with free 30S ribosomal subunits (but not with 30S subunits that are part of 70S ribosomes or polysomes). Required for efficient processing of 16S rRNA. May interact with the 5'-terminal helix region of 16S rRNA. In Pelobacter propionicus (strain DSM 2379 / NBRC 103807 / OttBd1), this protein is Ribosome-binding factor A.